Here is a 317-residue protein sequence, read N- to C-terminus: tRNA pseudouridine synthase B (317 aa).

Catalysis depends on aspartate 47, which acts as the Nucleophile.

Belongs to the pseudouridine synthase TruB family. Type 1 subfamily.

It catalyses the reaction uridine(55) in tRNA = pseudouridine(55) in tRNA. Functionally, responsible for synthesis of pseudouridine from uracil-55 in the psi GC loop of transfer RNAs. In Vibrio atlanticus (strain LGP32) (Vibrio splendidus (strain Mel32)), this protein is tRNA pseudouridine synthase B.